Here is a 904-residue protein sequence, read N- to C-terminus: DNA mismatch repair protein MutS (904 aa).

Residue 655–662 participates in ATP binding; that stretch reads GPNMGGKS.

The protein belongs to the DNA mismatch repair MutS family.

Functionally, this protein is involved in the repair of mismatches in DNA. It is possible that it carries out the mismatch recognition step. This protein has a weak ATPase activity. The polypeptide is DNA mismatch repair protein MutS (Agrobacterium fabrum (strain C58 / ATCC 33970) (Agrobacterium tumefaciens (strain C58))).